Here is a 401-residue protein sequence, read N- to C-terminus: Mannonate dehydratase (401 aa).

It belongs to the mannonate dehydratase family. It depends on Fe(2+) as a cofactor. Requires Mn(2+) as cofactor.

The enzyme catalyses D-mannonate = 2-dehydro-3-deoxy-D-gluconate + H2O. Its pathway is carbohydrate metabolism; pentose and glucuronate interconversion. In terms of biological role, catalyzes the dehydration of D-mannonate. The protein is Mannonate dehydratase of Brucella melitensis biotype 2 (strain ATCC 23457).